The sequence spans 345 residues: UDP-N-acetylenolpyruvoylglucosamine reductase (345 aa).

The 171-residue stretch at 16–186 (LPAYASNVIS…VSVGIKLMKS (171 aa)) folds into the FAD-binding PCMH-type domain. Residue R162 is part of the active site. The active-site Proton donor is S232. E328 is a catalytic residue.

The protein belongs to the MurB family. FAD is required as a cofactor.

It is found in the cytoplasm. It carries out the reaction UDP-N-acetyl-alpha-D-muramate + NADP(+) = UDP-N-acetyl-3-O-(1-carboxyvinyl)-alpha-D-glucosamine + NADPH + H(+). It functions in the pathway cell wall biogenesis; peptidoglycan biosynthesis. Functionally, cell wall formation. The polypeptide is UDP-N-acetylenolpyruvoylglucosamine reductase (Yersinia pestis).